Reading from the N-terminus, the 923-residue chain is DNA gyrase subunit A (923 aa).

Residues 34–534 enclose the Topo IIA-type catalytic domain; it reads LPDARDGLKP…SQVDLTIADL (501 aa). Catalysis depends on Tyr-122, which acts as the O-(5'-phospho-DNA)-tyrosine intermediate. A GyrA-box motif is present at residues 561–567; that stretch reads QRRGGKG. The interval 881–923 is disordered; it reads ERVQEPSGGDDEDLPEGEEAAESLGESAESESEPAAEAEGNEE. 2 stretches are compositionally biased toward acidic residues: residues 888–901 and 908–923; these read GGDDEDLPEGEEAA and AESESEPAAEAEGNEE.

This sequence belongs to the type II topoisomerase GyrA/ParC subunit family. As to quaternary structure, heterotetramer, composed of two GyrA and two GyrB chains. In the heterotetramer, GyrA contains the active site tyrosine that forms a transient covalent intermediate with DNA, while GyrB binds cofactors and catalyzes ATP hydrolysis.

It is found in the cytoplasm. It carries out the reaction ATP-dependent breakage, passage and rejoining of double-stranded DNA.. In terms of biological role, a type II topoisomerase that negatively supercoils closed circular double-stranded (ds) DNA in an ATP-dependent manner to modulate DNA topology and maintain chromosomes in an underwound state. Negative supercoiling favors strand separation, and DNA replication, transcription, recombination and repair, all of which involve strand separation. Also able to catalyze the interconversion of other topological isomers of dsDNA rings, including catenanes and knotted rings. Type II topoisomerases break and join 2 DNA strands simultaneously in an ATP-dependent manner. This is DNA gyrase subunit A from Pseudomonas aeruginosa (strain ATCC 15692 / DSM 22644 / CIP 104116 / JCM 14847 / LMG 12228 / 1C / PRS 101 / PAO1).